The sequence spans 249 residues: ATP synthase subunit a, chloroplastic (249 aa).

5 helical membrane-spanning segments follow: residues 40-60 (QVLI…VLAI), 97-117 (VPFI…GALL), 136-156 (INTT…AGLS), 201-221 (LVVV…VMFL), and 222-242 (GLFT…AYIG).

Belongs to the ATPase A chain family. In terms of assembly, F-type ATPases have 2 components, CF(1) - the catalytic core - and CF(0) - the membrane proton channel. CF(1) has five subunits: alpha(3), beta(3), gamma(1), delta(1), epsilon(1). CF(0) has four main subunits: a, b, b' and c.

The protein localises to the plastid. The protein resides in the chloroplast thylakoid membrane. Its function is as follows. Key component of the proton channel; it plays a direct role in the translocation of protons across the membrane. In Olimarabidopsis pumila (Dwarf rocket), this protein is ATP synthase subunit a, chloroplastic.